Reading from the N-terminus, the 392-residue chain is [Phe13]-bombesin receptor (392 aa).

The Extracellular segment spans residues 1-40 (MPEGFQSLNQTLPSAISSIAHLESLNDSFILGAKQSEDVS). Asn9 and Asn26 each carry an N-linked (GlcNAc...) asparagine glycan. A helical membrane pass occupies residues 41–62 (PGLEILALISVTYAVIISVGIL). Over 63–81 (GNTILIKVFFKIKSMQTVP) the chain is Cytoplasmic. Residues 82–102 (NIFITSLAFGDLLLLLTCVPV) form a helical membrane-spanning segment. At 103-120 (DASRYIVDTWMFGRAGCK) the chain is on the extracellular side. Cys119 and Cys202 are joined by a disulfide. The chain crosses the membrane as a helical span at residues 121 to 142 (IISFIQLTSVGVSVFTLTVLSA). At 143–162 (DRYRAIVKPLQLQTSDAVLK) the chain is on the cytoplasmic side. A helical membrane pass occupies residues 163 to 183 (TCGKAVCVWIISMLLAAPEAV). The Extracellular portion of the chain corresponds to 184 to 219 (FSDLYEFGSSEKNTTFEACAPYPVSEKILQETHSLI). Residues 220–240 (CFLVFYIVPLSIISAYYFLIA) traverse the membrane as a helical segment. Residues 241–271 (KTLYKSTFNMPAEEHTHARKQIESRKRVAKT) are Cytoplasmic-facing. Residues 272 to 292 (VLVLVALFAVCWLPNHMLYLY) traverse the membrane as a helical segment. At 293–312 (RSFTYHSAVNSSAFHLSATI) the chain is on the extracellular side. Residues 313–332 (FARVLAFSNSCVNPFALYWL) form a helical membrane-spanning segment. At 333–392 (SRSFRQHFKKQVYCCKTEPPASQQSPTHSSTITGITAVKGNIQMSEISITLLSAYDVKKE) the chain is on the cytoplasmic side. The S-palmitoyl cysteine moiety is linked to residue Cys346.

Belongs to the G-protein coupled receptor 1 family. Expressed only in brain, primarily in cortex and forebrain and at low levels in the midbrain.

The protein localises to the cell membrane. In terms of biological role, the relative rank potency of bombesin-like peptides for this receptor is [Phe13]bombesin &gt; [Leu13]bombesin &gt; GRP &gt; neuromedin-B. The sequence is that of [Phe13]-bombesin receptor (BB4) from Bombina orientalis (Oriental fire-bellied toad).